Consider the following 378-residue polypeptide: Succinyl-diaminopimelate desuccinylase (378 aa).

His77 serves as a coordination point for Zn(2+). Asp79 is a catalytic residue. Asp108 lines the Zn(2+) pocket. The active-site Proton acceptor is the Glu138. Zn(2+) contacts are provided by Glu139, Glu167, and His350.

This sequence belongs to the peptidase M20A family. DapE subfamily. In terms of assembly, homodimer. Zn(2+) serves as cofactor. Co(2+) is required as a cofactor.

The catalysed reaction is N-succinyl-(2S,6S)-2,6-diaminopimelate + H2O = (2S,6S)-2,6-diaminopimelate + succinate. Its pathway is amino-acid biosynthesis; L-lysine biosynthesis via DAP pathway; LL-2,6-diaminopimelate from (S)-tetrahydrodipicolinate (succinylase route): step 3/3. Its function is as follows. Catalyzes the hydrolysis of N-succinyl-L,L-diaminopimelic acid (SDAP), forming succinate and LL-2,6-diaminopimelate (DAP), an intermediate involved in the bacterial biosynthesis of lysine and meso-diaminopimelic acid, an essential component of bacterial cell walls. The polypeptide is Succinyl-diaminopimelate desuccinylase (Erythrobacter litoralis (strain HTCC2594)).